Consider the following 287-residue polypeptide: Membrane protein insertase YidC 2 (287 aa).

An N-terminal signal peptide occupies residues 1 to 26; sequence MKKKKRFKQKLLIASLVIGLVAVLSG. Residue cysteine 27 is the site of N-palmitoyl cysteine attachment. Residue cysteine 27 is the site of S-diacylglycerol cysteine attachment. The next 5 membrane-spanning stretches (helical) occupy residues 65 to 85, 135 to 155, 178 to 198, 207 to 224, and 228 to 250; these read YAVG…PLMI, MMGC…YQAI, YILP…SMMG, AMIV…GITL, and LALY…NNPF.

The protein belongs to the OXA1/ALB3/YidC family. Type 2 subfamily.

It is found in the cell membrane. In terms of biological role, required for the insertion and/or proper folding and/or complex formation of integral membrane proteins into the membrane. Involved in integration of membrane proteins that insert both dependently and independently of the Sec translocase complex, as well as at least some lipoproteins. This is Membrane protein insertase YidC 2 from Listeria innocua serovar 6a (strain ATCC BAA-680 / CLIP 11262).